The sequence spans 487 residues: MGKQQDWSVTACIFLSLSLASQIHCSSQTHFPSHKGGAGLSGDTSHFNSVSRENVLSLKEKDLIEKLPGQPSGISFRQYGGYVAVNEPATRFLYYYFVEAIKPSKSTPLVLWFNGGPGCSSVGFGAFEELGPFRVHSDGKTLYRNPYSWNNEANMLFFEGPISVGFSYSSTPFDWEIFGEQADKLTAEDNYMFLVNWLERFPEYKGRDVYISGQSYAGHYIPQLAQIILHRNNQTFINLRGISIGNPGLDLLIEADNENKFILSHGLVSQKDFEEYSKVCDFANYDMDECPKIMPKFSIEHNKHLDVYNIYAPVCLNSTLSSEPKKCTTIMEVDPCRSNYVKAYLNSENVQEAMHANTTKLPYEWKACNHYLNSVWIDADKDASMVPILHDLMGEGVRVLVYSGDVDAAIPFTATMAVLKTMNLTVVNEWRPWFTGGQLGGFTEDYERNLTYATVKGSGHSVPLDQPVHALNLFTSFIRNTPLPQTP.

The N-terminal stretch at 1 to 20 is a signal peptide; sequence MGKQQDWSVTACIFLSLSLA. Cystine bridges form between Cys-119/Cys-368, Cys-280/Cys-290, and Cys-315/Cys-336. Ser-215 is an active-site residue. Asn-233 is a glycosylation site (N-linked (GlcNAc...) asparagine). 2 N-linked (GlcNAc...) asparagine glycosylation sites follow: Asn-317 and Asn-357. Asp-407 is an active-site residue. Residues Asn-423 and Asn-449 are each glycosylated (N-linked (GlcNAc...) asparagine). Residue His-460 is part of the active site.

The protein belongs to the peptidase S10 family. In terms of tissue distribution, expressed in seedlings, roots, leaves, flowers and siliques.

The protein resides in the secreted. In terms of biological role, probable carboxypeptidase. This Arabidopsis thaliana (Mouse-ear cress) protein is Serine carboxypeptidase-like 38 (SCPL38).